A 26-amino-acid polypeptide reads, in one-letter code: Superoxide dismutase [Cu-Zn] (26 aa).

C7 carries S-palmitoyl cysteine lipidation.

It belongs to the Cu-Zn superoxide dismutase family. As to quaternary structure, homotrimer. Cu cation serves as cofactor. Zn(2+) is required as a cofactor.

It is found in the cytoplasm. The protein localises to the nucleus. It catalyses the reaction 2 superoxide + 2 H(+) = H2O2 + O2. Functionally, destroys radicals which are normally produced within the cells and which are toxic to biological systems. The chain is Superoxide dismutase [Cu-Zn] (sod1) from Paralichthys olivaceus (Bastard halibut).